The following is a 171-amino-acid chain: Adenine phosphoribosyltransferase (171 aa).

This sequence belongs to the purine/pyrimidine phosphoribosyltransferase family. In terms of assembly, homodimer.

It localises to the cytoplasm. It carries out the reaction AMP + diphosphate = 5-phospho-alpha-D-ribose 1-diphosphate + adenine. The protein operates within purine metabolism; AMP biosynthesis via salvage pathway; AMP from adenine: step 1/1. In terms of biological role, catalyzes a salvage reaction resulting in the formation of AMP, that is energically less costly than de novo synthesis. In Trichlorobacter lovleyi (strain ATCC BAA-1151 / DSM 17278 / SZ) (Geobacter lovleyi), this protein is Adenine phosphoribosyltransferase.